The sequence spans 305 residues: GMP synthase [glutamine-hydrolyzing] subunit B (305 aa).

In terms of domain architecture, GMPS ATP-PPase spans 2-184; that stretch reads VKTEKFIQKS…LGLPPEIQHR (183 aa). ATP is bound at residue 29 to 35; it reads SGGVDSS.

In terms of assembly, heterodimer composed of a glutamine amidotransferase subunit (A) and a GMP-binding subunit (B).

It carries out the reaction XMP + L-glutamine + ATP + H2O = GMP + L-glutamate + AMP + diphosphate + 2 H(+). It functions in the pathway purine metabolism; GMP biosynthesis; GMP from XMP (L-Gln route): step 1/1. In terms of biological role, catalyzes the synthesis of GMP from XMP. This is GMP synthase [glutamine-hydrolyzing] subunit B from Methanoregula boonei (strain DSM 21154 / JCM 14090 / 6A8).